Consider the following 173-residue polypeptide: Putative 4-hydroxy-4-methyl-2-oxoglutarate aldolase (173 aa).

Residues 89–92 and R111 each bind substrate; that span reads GGNL. D112 serves as a coordination point for a divalent metal cation.

Belongs to the class II aldolase/RraA-like family. In terms of assembly, homotrimer. A divalent metal cation is required as a cofactor.

It catalyses the reaction 4-hydroxy-4-methyl-2-oxoglutarate = 2 pyruvate. The enzyme catalyses oxaloacetate + H(+) = pyruvate + CO2. In terms of biological role, catalyzes the aldol cleavage of 4-hydroxy-4-methyl-2-oxoglutarate (HMG) into 2 molecules of pyruvate. Also contains a secondary oxaloacetate (OAA) decarboxylase activity due to the common pyruvate enolate transition state formed following C-C bond cleavage in the retro-aldol and decarboxylation reactions. The chain is Putative 4-hydroxy-4-methyl-2-oxoglutarate aldolase from Albidiferax ferrireducens (strain ATCC BAA-621 / DSM 15236 / T118) (Rhodoferax ferrireducens).